Here is a 446-residue protein sequence, read N- to C-terminus: MITIKKGLDLPIAGTPSQVINDGKTIKKVALLGEEYVGMRPTMHVRVGDEVKKAQVLFEDKKNPGVKFTAPAAGKVIEVNRGAKRVLQSVVIEVAGEEQVTFDKFEAAQLSGLDREVIKTQLVDSGLWTALRTRPFSKVPAIESSTKAIFVTAMDTNPLAAKPELIINEQQEAFIAGLDILSALTEGKVYVCKSGTSLPRSSQSNVEEHVFDGPHPAGLAGTHMHFLYPVNAENVAWSINYQDVIAFGKLFLTGELYTDRVVSLAGPVVNNPRLVRTVIGASLDDLTDNELMPGEVRVISGSVLTGTHATGPHAYLGRYHQQVSVLREGREKELFGWAMPGKNKFSVTRSFLGHVFKGQLFNMTTTTNGSDRSMVPIGNYERVMPLDMEPTLLLRDLCAGDTDSAQALGALELDEEDLALCTFVCPGKYEYGTLLRECLDTIEKEG.

This sequence belongs to the NqrA family. As to quaternary structure, composed of six subunits; NqrA, NqrB, NqrC, NqrD, NqrE and NqrF.

It carries out the reaction a ubiquinone + n Na(+)(in) + NADH + H(+) = a ubiquinol + n Na(+)(out) + NAD(+). Its activity is regulated as follows. This reaction is tightly coupled to the Na(+) pumping activity and specifically requires Na(+) for activity. Inhibited by korormicin and 2-N-heptyl-4-hydroxyquinoline N-oxide (HQNO). In terms of biological role, NQR complex catalyzes the reduction of ubiquinone-1 to ubiquinol by two successive reactions, coupled with the transport of Na(+) ions from the cytoplasm to the periplasm. NqrA to NqrE are probably involved in the second step, the conversion of ubisemiquinone to ubiquinol. The chain is Na(+)-translocating NADH-quinone reductase subunit A from Vibrio alginolyticus.